The primary structure comprises 54 residues: Ovomucoid (54 aa).

Residues 4–54 (VDCSDYPKPACTVEYMPLCGSDNKTYGNKCNFCNAVVDSNGTLTLSHFGKC) form the Kazal-like domain. 3 disulfides stabilise this stretch: Cys6–Cys36, Cys14–Cys33, and Cys22–Cys54. N-linked (GlcNAc...) asparagine glycosylation is present at Asn43.

The protein resides in the secreted. This Anser canagicus (Emperor goose) protein is Ovomucoid.